An 880-amino-acid polypeptide reads, in one-letter code: Leucine--tRNA ligase (880 aa).

The 'HIGH' region signature appears at 49–59 (PYPSGRIHMGH). A 'KMSKS' region motif is present at residues 638–642 (KMSKS). An ATP-binding site is contributed by Lys-641.

This sequence belongs to the class-I aminoacyl-tRNA synthetase family.

The protein resides in the cytoplasm. The catalysed reaction is tRNA(Leu) + L-leucine + ATP = L-leucyl-tRNA(Leu) + AMP + diphosphate. The sequence is that of Leucine--tRNA ligase from Bartonella henselae (strain ATCC 49882 / DSM 28221 / CCUG 30454 / Houston 1) (Rochalimaea henselae).